The chain runs to 444 residues: ATP-dependent protease ATPase subunit HslU (444 aa).

ATP contacts are provided by residues I18 and 60 to 65 (GVGKTE). The tract at residues 141-161 (DAWGNNEEGNNDSGTRQSFRK) is disordered. Over residues 147 to 157 (EEGNNDSGTRQ) the composition is skewed to polar residues. D257, E322, and R394 together coordinate ATP.

Belongs to the ClpX chaperone family. HslU subfamily. As to quaternary structure, a double ring-shaped homohexamer of HslV is capped on each side by a ring-shaped HslU homohexamer. The assembly of the HslU/HslV complex is dependent on binding of ATP.

It is found in the cytoplasm. Functionally, ATPase subunit of a proteasome-like degradation complex; this subunit has chaperone activity. The binding of ATP and its subsequent hydrolysis by HslU are essential for unfolding of protein substrates subsequently hydrolyzed by HslV. HslU recognizes the N-terminal part of its protein substrates and unfolds these before they are guided to HslV for hydrolysis. The polypeptide is ATP-dependent protease ATPase subunit HslU (Aliivibrio fischeri (strain ATCC 700601 / ES114) (Vibrio fischeri)).